The sequence spans 692 residues: DNA ligase (692 aa).

Residues 35–39 (DLVYD), 88–89 (SL), and Glu117 contribute to the NAD(+) site. The active-site N6-AMP-lysine intermediate is the Lys119. Arg140, Glu176, Lys301, and Lys325 together coordinate NAD(+). 4 residues coordinate Zn(2+): Cys416, Cys419, Cys434, and Cys439. Residues 611 to 692 (LTNQSNSWAS…FDLIKNSKKT (82 aa)) enclose the BRCT domain.

Belongs to the NAD-dependent DNA ligase family. LigA subfamily. Mg(2+) is required as a cofactor. Mn(2+) serves as cofactor.

It carries out the reaction NAD(+) + (deoxyribonucleotide)n-3'-hydroxyl + 5'-phospho-(deoxyribonucleotide)m = (deoxyribonucleotide)n+m + AMP + beta-nicotinamide D-nucleotide.. Functionally, DNA ligase that catalyzes the formation of phosphodiester linkages between 5'-phosphoryl and 3'-hydroxyl groups in double-stranded DNA using NAD as a coenzyme and as the energy source for the reaction. It is essential for DNA replication and repair of damaged DNA. This is DNA ligase from Mesomycoplasma hyopneumoniae (strain J / ATCC 25934 / NCTC 10110) (Mycoplasma hyopneumoniae).